Here is a 149-residue protein sequence, read N- to C-terminus: YbbR-like domain-containing protein in def 5'region (149 aa).

The YbbR-like domain occupies I1–E68.

The sequence is that of YbbR-like domain-containing protein in def 5'region from Thermus thermophilus.